The following is a 148-amino-acid chain: MAGFIGKERHALDEKGRLMIPVRFRRELSPESTGRGSTIYLMKAPDGSIELYEPDIWEGMKKSLAVLSDFNPEERLLKTMIYESLDVVAIDRQGRVPFSREFLEHAGIVRDVVIIGADTKMIVWAPERLSLLVMENAERYSSLARRYF.

SpoVT-AbrB domains lie at 7–56 (KERH…EPDI) and 85–128 (LDVV…APER).

The protein belongs to the MraZ family. As to quaternary structure, forms oligomers.

It is found in the cytoplasm. The protein resides in the nucleoid. The protein is Transcriptional regulator MraZ of Chlorobium phaeobacteroides (strain DSM 266 / SMG 266 / 2430).